The sequence spans 58 residues: Small ribosomal subunit protein eS31 (58 aa).

Residues cysteine 29, cysteine 32, cysteine 48, and cysteine 51 each contribute to the Zn(2+) site. The C4-type zinc finger occupies 29–51 (CPRCGSFMAHHLKPVPRWHCGKC).

The protein belongs to the eukaryotic ribosomal protein eS31 family. Part of the 30S ribosomal subunit. Zn(2+) is required as a cofactor.

The polypeptide is Small ribosomal subunit protein eS31 (Ignicoccus hospitalis (strain KIN4/I / DSM 18386 / JCM 14125)).